Reading from the N-terminus, the 170-residue chain is NAD(P)H-quinone oxidoreductase subunit I, chloroplastic (170 aa).

4Fe-4S ferredoxin-type domains are found at residues 55 to 84 and 95 to 124; these read GRIH…VDWK and LNYS…MTEE. [4Fe-4S] cluster contacts are provided by cysteine 64, cysteine 67, cysteine 70, cysteine 74, cysteine 104, cysteine 107, cysteine 110, and cysteine 114.

Belongs to the complex I 23 kDa subunit family. As to quaternary structure, NDH is composed of at least 16 different subunits, 5 of which are encoded in the nucleus. [4Fe-4S] cluster is required as a cofactor.

It is found in the plastid. Its subcellular location is the chloroplast thylakoid membrane. It carries out the reaction a plastoquinone + NADH + (n+1) H(+)(in) = a plastoquinol + NAD(+) + n H(+)(out). The enzyme catalyses a plastoquinone + NADPH + (n+1) H(+)(in) = a plastoquinol + NADP(+) + n H(+)(out). NDH shuttles electrons from NAD(P)H:plastoquinone, via FMN and iron-sulfur (Fe-S) centers, to quinones in the photosynthetic chain and possibly in a chloroplast respiratory chain. The immediate electron acceptor for the enzyme in this species is believed to be plastoquinone. Couples the redox reaction to proton translocation, and thus conserves the redox energy in a proton gradient. The sequence is that of NAD(P)H-quinone oxidoreductase subunit I, chloroplastic from Spinacia oleracea (Spinach).